A 103-amino-acid chain; its full sequence is Carboxysome shell protein CsoS1 (103 aa).

The 86-residue stretch at Ala9–Gly94 folds into the BMC domain.

Belongs to the bacterial microcompartments protein family. CsoS1 subfamily. Homohexamer with a small central pore. Forms a CsoS2-CsoS1-RuBisCO complex.

The protein resides in the carboxysome. One of the shell proteins of the carboxysome, a polyhedral inclusion where RuBisCO (ribulose bisphosphate carboxylase, ccbL-ccbS) is sequestered. Assembles into hexamers which make sheets that form the facets of the polyhedral carboxysome. This is Carboxysome shell protein CsoS1 from Prochlorococcus marinus (strain MIT 9313).